A 130-amino-acid chain; its full sequence is Small ribosomal subunit protein uS8B (130 aa).

Belongs to the universal ribosomal protein uS8 family. In terms of assembly, component of the small ribosomal subunit (SSU). Mature yeast ribosomes consist of a small (40S) and a large (60S) subunit. The 40S small subunit contains 1 molecule of ribosomal RNA (18S rRNA) and 33 different proteins (encoded by 57 genes). The large 60S subunit contains 3 rRNA molecules (25S, 5.8S and 5S rRNA) and 46 different proteins (encoded by 81 genes).

Its subcellular location is the cytoplasm. Component of the ribosome, a large ribonucleoprotein complex responsible for the synthesis of proteins in the cell. The small ribosomal subunit (SSU) binds messenger RNAs (mRNAs) and translates the encoded message by selecting cognate aminoacyl-transfer RNA (tRNA) molecules. The large subunit (LSU) contains the ribosomal catalytic site termed the peptidyl transferase center (PTC), which catalyzes the formation of peptide bonds, thereby polymerizing the amino acids delivered by tRNAs into a polypeptide chain. The nascent polypeptides leave the ribosome through a tunnel in the LSU and interact with protein factors that function in enzymatic processing, targeting, and the membrane insertion of nascent chains at the exit of the ribosomal tunnel. The protein is Small ribosomal subunit protein uS8B of Saccharomyces cerevisiae (strain ATCC 204508 / S288c) (Baker's yeast).